Consider the following 901-residue polypeptide: Bifunctional protein STORR (901 aa).

Residues threonine 12–leucine 32 form a helical membrane-spanning segment. Residue cysteine 513 participates in heme binding.

The protein in the N-terminal section; belongs to the cytochrome P450 family. This sequence in the C-terminal section; belongs to the aldo/keto reductase family. Heme serves as cofactor.

Its subcellular location is the membrane. The enzyme catalyses (R)-reticuline + NADP(+) = 1,2-dehydroreticuline + NADPH + H(+). It catalyses the reaction (S)-reticuline + reduced [NADPH--hemoprotein reductase] + O2 = 1,2-dehydroreticuline + oxidized [NADPH--hemoprotein reductase] + 2 H2O + H(+). It participates in alkaloid biosynthesis; morphine biosynthesis. Functionally, bifunctional protein involved in the biosynthesis of morphinan-type benzylisoquinoline alkaloids. Required for the isomerization of (S)- to (R)-reticuline. The cytochrome P450 module is responsible for the conversion of (S)-reticuline to 1,2-dehydroreticuline while the oxidoreductase module converts 1,2-dehydroreticuline to (R)-reticuline. The sequence is that of Bifunctional protein STORR from Papaver somniferum (Opium poppy).